The primary structure comprises 131 residues: Large ribosomal subunit protein bL21 (131 aa).

A compositionally biased stretch (basic and acidic residues) spans 106-116; that stretch reads TIDDMPKKEAA. Positions 106–131 are disordered; that stretch reads TIDDMPKKEAAPAKARRSTKKAAAAE.

This sequence belongs to the bacterial ribosomal protein bL21 family. Part of the 50S ribosomal subunit. Contacts protein L20.

Its function is as follows. This protein binds to 23S rRNA in the presence of protein L20. The polypeptide is Large ribosomal subunit protein bL21 (Koribacter versatilis (strain Ellin345)).